The primary structure comprises 147 residues: Heavy metal-dependent transcription regulator 2 (147 aa).

The region spanning 1 to 69 is the HTH merR-type domain; that stretch reads MNIGEASKTS…VEQIKELLAL (69 aa). Residues 3–22 constitute a DNA-binding region (H-T-H motif); the sequence is IGEASKTSGVSSKMIRYYEQ.

It localises to the cytoplasm. Transcriptional regulator involved in acid tolerance. Binds copper. This is Heavy metal-dependent transcription regulator 2 (hmrR2) from Rhizobium meliloti (strain 1021) (Ensifer meliloti).